The chain runs to 170 residues: Cyclic pyranopterin monophosphate synthase (170 aa).

The disordered stretch occupies residues 1 to 25 (MADPSTLTHPDPEGGVRMMDASQKS). Residues 78–80 (LCH) and 116–117 (ME) each bind substrate. The active site involves Asp131.

This sequence belongs to the MoaC family. In terms of assembly, homohexamer; trimer of dimers.

It carries out the reaction (8S)-3',8-cyclo-7,8-dihydroguanosine 5'-triphosphate = cyclic pyranopterin phosphate + diphosphate. It functions in the pathway cofactor biosynthesis; molybdopterin biosynthesis. In terms of biological role, catalyzes the conversion of (8S)-3',8-cyclo-7,8-dihydroguanosine 5'-triphosphate to cyclic pyranopterin monophosphate (cPMP). The polypeptide is Cyclic pyranopterin monophosphate synthase (Salinibacter ruber (strain DSM 13855 / M31)).